The following is a 376-amino-acid chain: Cytochrome b (376 aa).

4 helical membrane passes run 28–48 (YGFL…FLAS), 72–94 (WCFR…LHIL), 107–127 (SWIS…VGYV), and 169–189 (FFVL…IHIF). Heme b is bound by residues H78 and H92. H173 and H187 together coordinate heme b. H192 contacts a ubiquinone. A run of 4 helical transmembrane segments spans residues 214-234 (LLSL…IQSL), 274-294 (VPSK…LFLL), 317-337 (VPII…CQLP), and 340-360 (IFIL…LFVL).

This sequence belongs to the cytochrome b family. The main subunits of complex b-c1 are: cytochrome b, cytochrome c1 and the Rieske protein. The cofactor is heme b.

The protein localises to the mitochondrion inner membrane. Functionally, component of the ubiquinol-cytochrome c reductase complex (complex III or cytochrome b-c1 complex) that is part of the mitochondrial respiratory chain. The b-c1 complex mediates electron transfer from ubiquinol to cytochrome c. Contributes to the generation of a proton gradient across the mitochondrial membrane that is then used for ATP synthesis. In Plasmodium falciparum, this protein is Cytochrome b (MT-CYB).